A 1101-amino-acid chain; its full sequence is Serine/threonine-protein kinase PSK2 (1101 aa).

Thr-118 bears the Phosphothreonine mark. Positions 841–1099 constitute a Protein kinase domain; the sequence is FTILQVMGEG…IDEIYEDKWL (259 aa). ATP-binding positions include 847–855 and Lys-870; that span reads MGEGAYGKV. Residue Asp-975 is the Proton acceptor of the active site.

It belongs to the protein kinase superfamily. Ser/Thr protein kinase family.

Its subcellular location is the cytoplasm. It catalyses the reaction L-seryl-[protein] + ATP = O-phospho-L-seryl-[protein] + ADP + H(+). The enzyme catalyses L-threonyl-[protein] + ATP = O-phospho-L-threonyl-[protein] + ADP + H(+). Serine/threonine-protein kinase involved in the control of sugar metabolism and translation. Phosphorylates UGP1, which is required for normal glycogen and beta-(1,6)-glucan synthesis. This phosphorylation shifts glucose partitioning toward cell wall glucan synthesis at the expense of glycogen synthesis. Also phosphorylates the glycogen synthase GSY2 and the translation factors CAF20, TIF11 and SRO9. The polypeptide is Serine/threonine-protein kinase PSK2 (PSK2) (Saccharomyces cerevisiae (strain ATCC 204508 / S288c) (Baker's yeast)).